We begin with the raw amino-acid sequence, 249 residues long: tRNA pseudouridine synthase A (249 aa).

Aspartate 52 (nucleophile) is an active-site residue. Tyrosine 110 contributes to the substrate binding site.

It belongs to the tRNA pseudouridine synthase TruA family. As to quaternary structure, homodimer.

The enzyme catalyses uridine(38/39/40) in tRNA = pseudouridine(38/39/40) in tRNA. Formation of pseudouridine at positions 38, 39 and 40 in the anticodon stem and loop of transfer RNAs. In Syntrophomonas wolfei subsp. wolfei (strain DSM 2245B / Goettingen), this protein is tRNA pseudouridine synthase A.